We begin with the raw amino-acid sequence, 267 residues long: Adenosine 5'-phosphosulfate reductase (267 aa).

A disordered region spans residues 1-29; the sequence is MPPFATIPATERNSAAQHQDPSPMSQPFD. The segment covering 11–25 has biased composition (polar residues); it reads ERNSAAQHQDPSPMS. [4Fe-4S] cluster-binding residues include C139, C140, C228, and C231. C256 acts as the Nucleophile; cysteine thiosulfonate intermediate in catalysis.

The protein belongs to the PAPS reductase family. CysH subfamily. [4Fe-4S] cluster serves as cofactor.

The protein localises to the cytoplasm. The catalysed reaction is [thioredoxin]-disulfide + sulfite + AMP + 2 H(+) = adenosine 5'-phosphosulfate + [thioredoxin]-dithiol. The protein operates within sulfur metabolism; hydrogen sulfide biosynthesis; sulfite from sulfate. Functionally, catalyzes the formation of sulfite from adenosine 5'-phosphosulfate (APS) using thioredoxin as an electron donor. In Pseudomonas aeruginosa (strain LESB58), this protein is Adenosine 5'-phosphosulfate reductase.